The primary structure comprises 398 residues: MVFNKKTIEDVDVKGKRVLVRCDFNVPLQEGKITDENRLIGSLPTIKYLMENNAKVILCSHLGKPKGEVKPEMSLLPVAKRLSELLKKEVVFAADDNVVGENAKAAVKNMKDGDVILLQNTRYRIEETKNQDNFSKELASLGEIFVNDAFGTAHRAHCSTVGVTKFLPTAVCGYLIQKELEFLGNAIENPSRPFTAILGGVKVSDKINVINNLLEKVDTLIIGGGMSYTFARAQGYTIGTSVVEEDKIEYAKEMIDKAKEKGIKLLLPIDRVVTDKFDESAEPILEDDKNIKDGYMGMDIGPKTAKVYADAIKDSKTIIWNGPMGVFEFKNFAKGTFAVAKAMAESGAITIIGGGDSAAAINQLGFGDKMTHISTGGGASLEFLGGEELPGISALNNK.

Substrate contacts are provided by residues Asp23–Asn25, Arg38, His61–Lys64, Arg122, and Arg155. Residues Lys206, Gly297, Glu328, and Gly354–Ser357 each bind ATP.

It belongs to the phosphoglycerate kinase family. Monomer.

It is found in the cytoplasm. It carries out the reaction (2R)-3-phosphoglycerate + ATP = (2R)-3-phospho-glyceroyl phosphate + ADP. It participates in carbohydrate degradation; glycolysis; pyruvate from D-glyceraldehyde 3-phosphate: step 2/5. This chain is Phosphoglycerate kinase, found in Clostridium kluyveri (strain NBRC 12016).